Consider the following 716-residue polypeptide: Translation initiation factor IF-2 (716 aa).

The interval 50 to 136 (YKKGGARAKS…VKPKKELPEK (87 aa)) is disordered. Over residues 62–84 (PAETNKNKQPQGVNQQSAGNQPN) the composition is skewed to polar residues. Residues 101–113 (KNKKNNNNKKNKR) are compositionally biased toward basic residues. Positions 114–126 (NNNNNKNQHQQKP) are enriched in low complexity. The tr-type G domain occupies 217-386 (IRPPVVTIMG…LLVSEVEELK (170 aa)). The segment at 226 to 233 (GHVDHGKT) is G1. 226 to 233 (GHVDHGKT) is a GTP binding site. Residues 251–255 (GITQH) are G2. The segment at 272-275 (DTPG) is G3. Residues 272–276 (DTPGH) and 326–329 (NKID) each bind GTP. Positions 326–329 (NKID) are G4. The interval 362-364 (SAL) is G5.

The protein belongs to the TRAFAC class translation factor GTPase superfamily. Classic translation factor GTPase family. IF-2 subfamily.

The protein localises to the cytoplasm. Functionally, one of the essential components for the initiation of protein synthesis. Protects formylmethionyl-tRNA from spontaneous hydrolysis and promotes its binding to the 30S ribosomal subunits. Also involved in the hydrolysis of GTP during the formation of the 70S ribosomal complex. This is Translation initiation factor IF-2 (infB) from Bacillus subtilis (strain 168).